The sequence spans 883 residues: N,N'-diacetylchitobiase (883 aa).

The signal sequence occupies residues Met1–Gly17. Cys18 is lipidated: N-palmitoyl cysteine. The S-diacylglycerol cysteine moiety is linked to residue Cys18. Disulfide bonds link Cys54/Cys64, Cys394/Cys402, and Cys502/Cys577. Glu537 acts as the Proton donor in catalysis.

Belongs to the glycosyl hydrolase 20 family. Post-translationally, this protein is probably a lipoprotein, its processing is inhibited by globomycin.

The protein resides in the cell outer membrane. The catalysed reaction is Hydrolysis of terminal non-reducing N-acetyl-D-hexosamine residues in N-acetyl-beta-D-hexosaminides.. It participates in glycan degradation; chitin degradation. Its function is as follows. Hydrolysis of terminal, non-reducing N-acetyl-beta-D-glucosamine residues in chitobiose and higher analogs, and in glycoproteins. The polypeptide is N,N'-diacetylchitobiase (chb) (Vibrio harveyi (Beneckea harveyi)).